We begin with the raw amino-acid sequence, 212 residues long: Thiamine-phosphate synthase (212 aa).

Residues 39 to 43 (QLRIK) and Asn-71 each bind 4-amino-2-methyl-5-(diphosphooxymethyl)pyrimidine. The Mg(2+) site is built by Asp-72 and Asp-91. Ser-110 lines the 4-amino-2-methyl-5-(diphosphooxymethyl)pyrimidine pocket. 136 to 138 (TQT) lines the 2-[(2R,5Z)-2-carboxy-4-methylthiazol-5(2H)-ylidene]ethyl phosphate pocket. Residue Lys-139 participates in 4-amino-2-methyl-5-(diphosphooxymethyl)pyrimidine binding. 2-[(2R,5Z)-2-carboxy-4-methylthiazol-5(2H)-ylidene]ethyl phosphate is bound by residues Gly-168 and 188–189 (VS).

Belongs to the thiamine-phosphate synthase family. It depends on Mg(2+) as a cofactor.

The enzyme catalyses 2-[(2R,5Z)-2-carboxy-4-methylthiazol-5(2H)-ylidene]ethyl phosphate + 4-amino-2-methyl-5-(diphosphooxymethyl)pyrimidine + 2 H(+) = thiamine phosphate + CO2 + diphosphate. It carries out the reaction 2-(2-carboxy-4-methylthiazol-5-yl)ethyl phosphate + 4-amino-2-methyl-5-(diphosphooxymethyl)pyrimidine + 2 H(+) = thiamine phosphate + CO2 + diphosphate. The catalysed reaction is 4-methyl-5-(2-phosphooxyethyl)-thiazole + 4-amino-2-methyl-5-(diphosphooxymethyl)pyrimidine + H(+) = thiamine phosphate + diphosphate. The protein operates within cofactor biosynthesis; thiamine diphosphate biosynthesis; thiamine phosphate from 4-amino-2-methyl-5-diphosphomethylpyrimidine and 4-methyl-5-(2-phosphoethyl)-thiazole: step 1/1. In terms of biological role, condenses 4-methyl-5-(beta-hydroxyethyl)thiazole monophosphate (THZ-P) and 2-methyl-4-amino-5-hydroxymethyl pyrimidine pyrophosphate (HMP-PP) to form thiamine monophosphate (TMP). This Serratia proteamaculans (strain 568) protein is Thiamine-phosphate synthase.